We begin with the raw amino-acid sequence, 501 residues long: E3 ubiquitin-protein ligase TRIM35 (501 aa).

At Met1 the chain carries N-acetylmethionine. Ser8 carries the phosphoserine modification. Residues 21 to 61 (CAVCYDPFRDAVTLRCGHNFCRRCVSGCWEVQTTPSCPVCK) form an RING-type zinc finger. The B box-type zinc finger occupies 96–137 (RSPRPCRAHRAPLTLFCVEDKELLCCACQADARHQEHRVQPI). Cys101, His104, Cys123, and His129 together coordinate Zn(2+). A coiled-coil region spans residues 209–252 (MKEESRKKHLLAEEKMKQLAEQTEALAREIERLQMEMKEDDMTF). Positions 284–495 (LESLQYRVWK…LRICHLRVSI (212 aa)) constitute a B30.2/SPRY domain.

In terms of assembly, interacts with PKM isoform M2, but not isoform M1; this interaction may compete with that between PKM and FGFR1, and hence reduces FGFR1-dependent tyrosine phosphorylation of PKM. Interacts with IRF7; this interaction promotes IRF7 proteasomal degradation. Interacts with TRAF3; this interaction promotes TRAF3 activation.

The protein resides in the cytoplasm. The protein localises to the nucleus. The catalysed reaction is S-ubiquitinyl-[E2 ubiquitin-conjugating enzyme]-L-cysteine + [acceptor protein]-L-lysine = [E2 ubiquitin-conjugating enzyme]-L-cysteine + N(6)-ubiquitinyl-[acceptor protein]-L-lysine.. It functions in the pathway protein modification; protein ubiquitination. Functionally, E3 ubiquitin-protein ligase that participates in multiple biological processes including cell death, glucose metabolism, and in particular, the innate immune response. Mediates 'Lys-63'-linked polyubiquitination of TRAF3 thereby promoting type I interferon production via RIG-I signaling pathway. Can also catalyze 'Lys-48'-linked polyubiquitination and proteasomal degradation of viral proteins such as influenza virus PB2. Acts as a negative feedback regulator of TLR7- and TLR9-triggered signaling. Mechanistically, promotes the 'Lys-48'-linked ubiquitination of IRF7 and induces its degradation via a proteasome-dependent pathway. Reduces FGFR1-dependent tyrosine phosphorylation of PKM, inhibiting PKM-dependent lactate production, glucose metabolism, and cell growth. This chain is E3 ubiquitin-protein ligase TRIM35 (Trim35), found in Rattus norvegicus (Rat).